Reading from the N-terminus, the 181-residue chain is Caltractin ICL1a (181 aa).

The tract at residues 1–29 (MARRGQQPPPQQAPPAQKNQPGKFNPAEF) is disordered. The span at 14–23 (PPAQKNQPGK) shows a compositional bias: low complexity. EF-hand domains are found at residues 37 to 72 (EEVL…LGFE), 73 to 108 (AKNQ…RISE), 110 to 145 (DSKA…LGET), and 146 to 181 (MDDS…KTFA). Residues Asp-50, Asp-52, Thr-54, Ser-56, Glu-61, Asp-86, Asp-88, Ser-90, Gln-92, and Glu-97 each coordinate Ca(2+).

Belongs to the centrin family. Monomer.

The protein resides in the cytoplasm. The protein localises to the cytoskeleton. Functionally, plays a fundamental role in microtubule organizing center structure and function. Component of the infraciliary lattice (ICL) and the ciliary basal bodies. This Paramecium tetraurelia protein is Caltractin ICL1a (Icl1a).